We begin with the raw amino-acid sequence, 359 residues long: sn-1 acyl-lipid omega-3 desaturase (ferredoxin) (359 aa).

2 helical membrane passes run 44–64 (LGYFFLDVGLIAGFYALAAYL) and 67–87 (WFFYPIFWLIQGTLFWSLFVV). Positions 89–93 (HDCGH) match the Histidine box-1 motif. The Histidine box-2 signature appears at 125–129 (HRTHH). The next 3 helical transmembrane spans lie at 153–173 (AWYEKLLRFYLPLIAYPIYLF), 206–226 (LAAFVGFLGFLTWQFGWLFLL), and 228–248 (FYVAPYLVFVVWLDLVTFLHH). The short motif at 291–295 (HHIFS) is the Histidine box-3 element.

The protein belongs to the fatty acid desaturase type 2 family. Requires Fe(2+) as cofactor.

It localises to the membrane. The catalysed reaction is a 1-[(9Z,12Z)-octadecdienoyl]-2-acyl-glycerolipid + 2 reduced [2Fe-2S]-[ferredoxin] + O2 + 2 H(+) = a 1-[(9Z,12Z,15Z)-octadectrienoyl]-2-acyl-glycerolipid + 2 oxidized [2Fe-2S]-[ferredoxin] + 2 H2O. It catalyses the reaction a 1-[(6Z,9Z,12Z)-octadectrienoyl]-2-acyl-glycerolipid + 2 reduced [2Fe-2S]-[ferredoxin] + O2 + 2 H(+) = a 1-[(6Z,9Z,12Z,15Z)-octadectetraenoyl]-2-acyl-glycerolipid + 2 oxidized [2Fe-2S]-[ferredoxin] + 2 H2O. It functions in the pathway lipid metabolism; polyunsaturated fatty acid biosynthesis. In terms of biological role, desaturase involved in fatty acid biosynthesis. Introduces a double bond at carbon 15 of linoleoyl and gamma-linolenoyl groups attached to the sn-1 position of the glycerol moiety of membrane glycerolipids. The polypeptide is sn-1 acyl-lipid omega-3 desaturase (ferredoxin) (Synechocystis sp. (strain ATCC 27184 / PCC 6803 / Kazusa)).